Here is a 421-residue protein sequence, read N- to C-terminus: Zinc metalloproteinase-disintegrin-like crotastatin (421 aa).

In terms of domain architecture, Peptidase M12B spans K10 to P206. N29 is a glycosylation site (N-linked (GlcNAc...) asparagine). 3 disulfides stabilise this stretch: C121–C201, C161–C185, and C163–C168. H146 lines the Zn(2+) pocket. Residue E147 is part of the active site. 2 residues coordinate Zn(2+): H150 and H156. One can recognise a Disintegrin domain in the interval P214–N299. Ca(2+) is bound by residues V216, N219, F221, E223, E226, and D229. 14 cysteine pairs are disulfide-bonded: C217–C246, C228–C241, C230–C236, C240–C263, C254–C260, C259–C285, C272–C292, C279–C310, C303–C315, C322–C372, C337–C383, C350–C360, C367–C409, and C403–C414. A D/ECD-tripeptide motif is present at residues E278 to D280. 5 residues coordinate Ca(2+): D280, M281, D283, D294, and R295.

Belongs to the venom metalloproteinase (M12B) family. P-III subfamily. P-IIIc sub-subfamily. Homodimer; disulfide-linked. Zn(2+) serves as cofactor. As to expression, expressed by the venom gland.

The protein resides in the secreted. Its function is as follows. Snake venom zinc metalloprotease that induces apoptosis in vascular endothelial cells (VEC), without degrading the extracellular matrix (it cannot cleave collagen) or inhibiting adhesion of VEC. Has also fibrinogenolytic and hemorrhagic activities. This Crotalus durissus terrificus (South American rattlesnake) protein is Zinc metalloproteinase-disintegrin-like crotastatin.